Reading from the N-terminus, the 338-residue chain is Ketol-acid reductoisomerase (NADP(+)) (338 aa).

Residues 1–181 (MQVYYDKDCD…GGGRTGIIET (181 aa)) enclose the KARI N-terminal Rossmann domain. Residues 24–27 (YGSQ), Arg47, Ser50, Ser52, and 82–85 (DEFQ) contribute to the NADP(+) site. His107 is a catalytic residue. Gly133 is a binding site for NADP(+). Positions 182 to 327 (TFKDETETDL…EKLRSMMPWI (146 aa)) constitute a KARI C-terminal knotted domain. 4 residues coordinate Mg(2+): Asp190, Glu194, Glu226, and Glu230. Ser251 provides a ligand contact to substrate.

This sequence belongs to the ketol-acid reductoisomerase family. It depends on Mg(2+) as a cofactor.

The catalysed reaction is (2R)-2,3-dihydroxy-3-methylbutanoate + NADP(+) = (2S)-2-acetolactate + NADPH + H(+). It carries out the reaction (2R,3R)-2,3-dihydroxy-3-methylpentanoate + NADP(+) = (S)-2-ethyl-2-hydroxy-3-oxobutanoate + NADPH + H(+). Its pathway is amino-acid biosynthesis; L-isoleucine biosynthesis; L-isoleucine from 2-oxobutanoate: step 2/4. It participates in amino-acid biosynthesis; L-valine biosynthesis; L-valine from pyruvate: step 2/4. Its function is as follows. Involved in the biosynthesis of branched-chain amino acids (BCAA). Catalyzes an alkyl-migration followed by a ketol-acid reduction of (S)-2-acetolactate (S2AL) to yield (R)-2,3-dihydroxy-isovalerate. In the isomerase reaction, S2AL is rearranged via a Mg-dependent methyl migration to produce 3-hydroxy-3-methyl-2-ketobutyrate (HMKB). In the reductase reaction, this 2-ketoacid undergoes a metal-dependent reduction by NADPH to yield (R)-2,3-dihydroxy-isovalerate. This chain is Ketol-acid reductoisomerase (NADP(+)), found in Hahella chejuensis (strain KCTC 2396).